Here is a 213-residue protein sequence, read N- to C-terminus: Pyridoxine/pyridoxamine 5'-phosphate oxidase (213 aa).

Residues 60–65, 75–76, Lys-82, and Gln-104 contribute to the FMN site; these read RMVLMK and YS. Residue Lys-65 participates in substrate binding. Tyr-122 and Arg-126 together coordinate substrate. FMN contacts are provided by residues 139 to 140 and Trp-184; that span reads QS. Position 190–192 (190–192) interacts with substrate; sequence RLH. Arg-194 is a binding site for FMN.

This sequence belongs to the pyridoxamine 5'-phosphate oxidase family. As to quaternary structure, homodimer. FMN serves as cofactor.

It carries out the reaction pyridoxamine 5'-phosphate + O2 + H2O = pyridoxal 5'-phosphate + H2O2 + NH4(+). The enzyme catalyses pyridoxine 5'-phosphate + O2 = pyridoxal 5'-phosphate + H2O2. It participates in cofactor metabolism; pyridoxal 5'-phosphate salvage; pyridoxal 5'-phosphate from pyridoxamine 5'-phosphate: step 1/1. The protein operates within cofactor metabolism; pyridoxal 5'-phosphate salvage; pyridoxal 5'-phosphate from pyridoxine 5'-phosphate: step 1/1. Its function is as follows. Catalyzes the oxidation of either pyridoxine 5'-phosphate (PNP) or pyridoxamine 5'-phosphate (PMP) into pyridoxal 5'-phosphate (PLP). This is Pyridoxine/pyridoxamine 5'-phosphate oxidase from Nitrobacter winogradskyi (strain ATCC 25391 / DSM 10237 / CIP 104748 / NCIMB 11846 / Nb-255).